Consider the following 438-residue polypeptide: MPYFPGVEKVRFEGPSSDAPLAFRHYDANKIILGKPMREHLRMAACYWHTFVWPGADMFGVGTFKRPWQRSGDPMELAIGKADAAFEFFSKLGIDYYSFHDTDVAPEGSSLKEYRHHFAQMVDHLERHQEQTGIKLLWGTANCFSNPRFAAGAASNPDPEVFAYAAAQVFSAMNATLRLKGANYVLWGGREGYETLLNTDLKREREQLGRFMRMVVEHKHKIGFKGDLLIEPKPQEPTKHQYDYDSATVFGFLHEYGLEHEIKVNIEANHATLAGHSFHHEIATAVSLGIFGSIDANRGDPQNGWDTDQFPNSVEEMTLATYEILKAGGFKNGGYNFDSKVRRQSLDDVDLFHGHVAAMDVLALALERAAAMVQNDRLQQFKDQRYAGWQQPLGQAVLAGEFSLASLAEHAFAHELNPQAVSGRQEMLEGVVNRFIYT.

2 residues coordinate Mg(2+): Asp306 and Asp308.

It belongs to the xylose isomerase family. As to quaternary structure, homotetramer. Mg(2+) is required as a cofactor.

The protein localises to the cytoplasm. The catalysed reaction is alpha-D-xylose = alpha-D-xylulofuranose. The protein is Xylose isomerase of Pseudomonas fluorescens (strain SBW25).